The primary structure comprises 401 residues: Lipoyl synthase 1, mitochondrial (401 aa).

Residues 1–25 constitute a mitochondrion transit peptide; it reads MWSSSSSLCRNPSFRRAWLSTVTVT. A disordered region spans residues 49–79; the sequence is IDDFSSTNAPTTTTHYTSSNGSPIVRQKAAP. The segment covering 51–70 has biased composition (polar residues); the sequence is DFSSTNAPTTTTHYTSSNGS. Cysteine 117, cysteine 122, cysteine 128, cysteine 148, cysteine 152, cysteine 155, and serine 376 together coordinate [4Fe-4S] cluster. The 233-residue stretch at 133-365 folds into the Radical SAM core domain; it reads EDQTATATIM…QETAMGMGFA (233 aa).

The protein belongs to the radical SAM superfamily. Lipoyl synthase family. Requires [4Fe-4S] cluster as cofactor.

The protein localises to the mitochondrion. The enzyme catalyses [[Fe-S] cluster scaffold protein carrying a second [4Fe-4S](2+) cluster] + N(6)-octanoyl-L-lysyl-[protein] + 2 oxidized [2Fe-2S]-[ferredoxin] + 2 S-adenosyl-L-methionine + 4 H(+) = [[Fe-S] cluster scaffold protein] + N(6)-[(R)-dihydrolipoyl]-L-lysyl-[protein] + 4 Fe(3+) + 2 hydrogen sulfide + 2 5'-deoxyadenosine + 2 L-methionine + 2 reduced [2Fe-2S]-[ferredoxin]. It functions in the pathway protein modification; protein lipoylation via endogenous pathway; protein N(6)-(lipoyl)lysine from octanoyl-[acyl-carrier-protein]: step 2/2. Catalyzes the radical-mediated insertion of two sulfur atoms into the C-6 and C-8 positions of the octanoyl moiety bound to the lipoyl domains of lipoate-dependent enzymes, thereby converting the octanoylated domains into lipoylated derivatives. The polypeptide is Lipoyl synthase 1, mitochondrial (Phaeodactylum tricornutum (strain CCAP 1055/1)).